Consider the following 557-residue polypeptide: Urocanate hydratase (557 aa).

Residues 1–20 (MSNPRHNEREVRSPRGDELN) form a disordered region. Residues 52–53 (GG), Gln-130, 176–178 (GMG), Glu-196, Arg-201, 242–243 (NA), 263–267 (QTSAH), 273–274 (YL), and Tyr-322 each bind NAD(+). Residue Cys-410 is part of the active site. NAD(+) is bound at residue Gly-492.

The protein belongs to the urocanase family. NAD(+) is required as a cofactor.

It is found in the cytoplasm. The enzyme catalyses 4-imidazolone-5-propanoate = trans-urocanate + H2O. It participates in amino-acid degradation; L-histidine degradation into L-glutamate; N-formimidoyl-L-glutamate from L-histidine: step 2/3. Its function is as follows. Catalyzes the conversion of urocanate to 4-imidazolone-5-propionate. The chain is Urocanate hydratase from Brucella abortus (strain S19).